The sequence spans 562 residues: Arginine--tRNA ligase 1 (562 aa).

The 'HIGH' region signature appears at 122–132 (PNIAKPFSMGH).

The protein belongs to the class-I aminoacyl-tRNA synthetase family. Monomer.

It is found in the cytoplasm. The enzyme catalyses tRNA(Arg) + L-arginine + ATP = L-arginyl-tRNA(Arg) + AMP + diphosphate. This is Arginine--tRNA ligase 1 from Bacillus cereus (strain ZK / E33L).